Consider the following 377-residue polypeptide: Nitric oxide reductase FlRd-NAD(+) reductase (377 aa).

This sequence belongs to the FAD-dependent oxidoreductase family. Requires FAD as cofactor.

The protein localises to the cytoplasm. It catalyses the reaction 2 reduced [nitric oxide reductase rubredoxin domain] + NAD(+) + H(+) = 2 oxidized [nitric oxide reductase rubredoxin domain] + NADH. The protein operates within nitrogen metabolism; nitric oxide reduction. One of at least two accessory proteins for anaerobic nitric oxide (NO) reductase. Reduces the rubredoxin moiety of NO reductase. The polypeptide is Nitric oxide reductase FlRd-NAD(+) reductase (Shigella sonnei (strain Ss046)).